A 449-amino-acid polypeptide reads, in one-letter code: Phosphoglucosamine mutase (449 aa).

Ser100 acts as the Phosphoserine intermediate in catalysis. Mg(2+) contacts are provided by Ser100, Asp241, Asp243, and Asp245. Phosphoserine is present on Ser100.

This sequence belongs to the phosphohexose mutase family. The cofactor is Mg(2+). In terms of processing, activated by phosphorylation.

It carries out the reaction alpha-D-glucosamine 1-phosphate = D-glucosamine 6-phosphate. Functionally, catalyzes the conversion of glucosamine-6-phosphate to glucosamine-1-phosphate. The polypeptide is Phosphoglucosamine mutase (Caldicellulosiruptor bescii (strain ATCC BAA-1888 / DSM 6725 / KCTC 15123 / Z-1320) (Anaerocellum thermophilum)).